Reading from the N-terminus, the 379-residue chain is F-box/kelch-repeat protein At4g33900 (379 aa).

An F-box domain is found at 9–55; that stretch reads IKRFLMLPDDLVFNCLARVSRLHYPTLSLVSKKFRFLLASKELYQTR. 3 Kelch repeats span residues 116-175, 176-222, and 262-308; these read EIYA…TLDG, RIYV…LSIS, and SCCV…RNFK.

This Arabidopsis thaliana (Mouse-ear cress) protein is F-box/kelch-repeat protein At4g33900.